A 125-amino-acid polypeptide reads, in one-letter code: Large ribosomal subunit protein bL12 (125 aa).

It belongs to the bacterial ribosomal protein bL12 family. In terms of assembly, homodimer. Part of the ribosomal stalk of the 50S ribosomal subunit. Forms a multimeric L10(L12)X complex, where L10 forms an elongated spine to which 2 to 4 L12 dimers bind in a sequential fashion. Binds GTP-bound translation factors.

Forms part of the ribosomal stalk which helps the ribosome interact with GTP-bound translation factors. Is thus essential for accurate translation. In Cereibacter sphaeroides (Rhodobacter sphaeroides), this protein is Large ribosomal subunit protein bL12.